A 348-amino-acid chain; its full sequence is uncharacterized protein (348 aa).

In terms of biological role, may be involved in apoptosis regulation. This is an uncharacterized protein from Rattus norvegicus (Rat).